The chain runs to 441 residues: Signal recognition particle 54 kDa protein (441 aa).

GTP is bound by residues 103-110 (GVQGSGKT), 184-188 (DTAGR), and 244-247 (TKMD).

The protein belongs to the GTP-binding SRP family. SRP54 subfamily. In terms of assembly, part of the signal recognition particle protein translocation system, which is composed of SRP and FtsY. Archaeal SRP consists of a 7S RNA molecule of 300 nucleotides and two protein subunits: SRP54 and SRP19.

It localises to the cytoplasm. The enzyme catalyses GTP + H2O = GDP + phosphate + H(+). Functionally, involved in targeting and insertion of nascent membrane proteins into the cytoplasmic membrane. Binds to the hydrophobic signal sequence of the ribosome-nascent chain (RNC) as it emerges from the ribosomes. The SRP-RNC complex is then targeted to the cytoplasmic membrane where it interacts with the SRP receptor FtsY. The polypeptide is Signal recognition particle 54 kDa protein (Aeropyrum pernix (strain ATCC 700893 / DSM 11879 / JCM 9820 / NBRC 100138 / K1)).